Reading from the N-terminus, the 52-residue chain is Defensin-like protein 2B (52 aa).

Intrachain disulfides connect C4-C52, C16-C37, C22-C46, and C26-C48.

As to quaternary structure, forms oligomers in its native state.

Functionally, possesses antifungal activity sensitive to inorganic cations. In Sinapis alba (White mustard), this protein is Defensin-like protein 2B.